A 394-amino-acid chain; its full sequence is S-adenosylmethionine synthase (394 aa).

His15 is an ATP binding site. Mg(2+) is bound at residue Asp17. Glu43 is a binding site for K(+). L-methionine is bound by residues Glu56 and Gln99. The tract at residues 99–109 is flexible loop; sequence QSPDIALGVNK. ATP is bound by residues 173 to 175, 239 to 240, Asp248, 254 to 255, Ala271, and Lys275; these read DGK, RF, and RK. Asp248 serves as a coordination point for L-methionine. An L-methionine-binding site is contributed by Lys279.

The protein belongs to the AdoMet synthase family. As to quaternary structure, homotetramer; dimer of dimers. Mg(2+) is required as a cofactor. The cofactor is K(+).

Its subcellular location is the cytoplasm. The catalysed reaction is L-methionine + ATP + H2O = S-adenosyl-L-methionine + phosphate + diphosphate. The protein operates within amino-acid biosynthesis; S-adenosyl-L-methionine biosynthesis; S-adenosyl-L-methionine from L-methionine: step 1/1. In terms of biological role, catalyzes the formation of S-adenosylmethionine (AdoMet) from methionine and ATP. The overall synthetic reaction is composed of two sequential steps, AdoMet formation and the subsequent tripolyphosphate hydrolysis which occurs prior to release of AdoMet from the enzyme. This Kosmotoga olearia (strain ATCC BAA-1733 / DSM 21960 / TBF 19.5.1) protein is S-adenosylmethionine synthase.